The following is a 547-amino-acid chain: MDTFTIEEIVKFDGGGGGISTINSNNDNIGIPSNTFEMIISTIQHFLDRSSSVASTIAVFVLSFILFFMFGWFYFLKILFRDYEVKKVFVQLSFSITFALSLTLFELIFFEIMDFMDREWRYRFWEFDLTLMSINLILVLPYYQFYLLVLAYGFSKRKTLFFSLVLLVLYLILFWKIGDPFPILKEYTGLVSLEMGIGRIGIVGCTVMSLLSGYGAVYVPYSYITYFLKPVKDVTITKLEKQFNHALDKIFNKKKRVVLLKRELTRRNVNNNNNNNNNYDTYNYNNNYNNNSNNNNNNNNSNNNNNNNLPIIGPIFSKIYNLWNVGYHHQLSRPIDDIKQLEREIKQLEDLNRDLFTQIHELKLERLRIQFSTTLRGKFYNWLGYFFSIYWKKKSALNIVFDRRGGMDPVTRGLDIALRYFHFQVDVTFWSQHISFILVGLMTASSIRGFLNQILKVFHEYSSSLSSNNIVLILAQVMGMYFISSVLMMRTSMPEIYTRFIVTQILGDIEFSFYHRWFDFIFIPSAIITTLALIFMSKSSTFHLNDE.

Transmembrane regions (helical) follow at residues Thr56–Leu76, Leu92–Ile112, Ile134–Phe154, Leu164–Leu184, and Ile200–Pro220. The interval Asn268–Asn305 is disordered. N-linked (GlcNAc...) asparagine glycans are attached at residues Asn290 and Asn299. Helical transmembrane passes span Val427–Ile447, Asn469–Met489, and Trp517–Ser537.

Belongs to the Golgi pH regulator (TC 1.A.38) family.

Its subcellular location is the membrane. In Dictyostelium discoideum (Social amoeba), this protein is Golgi pH regulator homolog (gpr89).